Consider the following 479-residue polypeptide: Cyclin-dependent kinase F-1 (479 aa).

The 396-residue stretch at 24-419 folds into the Protein kinase domain; that stretch reads YEVLGRAGSG…AADLLNDPYF (396 aa). ATP is bound by residues 30–38 and lysine 53; that span reads AGSGAYADV. Aspartate 146 functions as the Proton acceptor in the catalytic mechanism. Threonine 291 carries the phosphothreonine modification. Residues 429–479 form a disordered region; sequence EGLQVPESKDEDDDSTEEWANFRGGDSDSDFDEFGSMDVTKTDKGFSIRFS. Residues 468-479 show a composition bias toward basic and acidic residues; the sequence is TKTDKGFSIRFS.

This sequence belongs to the protein kinase superfamily. CMGC Ser/Thr protein kinase family. CDC2/CDKX subfamily.

The catalysed reaction is L-seryl-[protein] + ATP = O-phospho-L-seryl-[protein] + ADP + H(+). The enzyme catalyses L-threonyl-[protein] + ATP = O-phospho-L-threonyl-[protein] + ADP + H(+). It carries out the reaction [DNA-directed RNA polymerase] + ATP = phospho-[DNA-directed RNA polymerase] + ADP + H(+). In Oryza sativa subsp. japonica (Rice), this protein is Cyclin-dependent kinase F-1 (CDKF-1).